The chain runs to 273 residues: Dermonecrotic toxin LruSicTox-alphaIC1c (273 aa).

Residue H5 is part of the active site. Residues E25 and D27 each coordinate Mg(2+). The active-site Nucleophile is H41. Disulfide bonds link C45–C51 and C47–C190. A Mg(2+)-binding site is contributed by D85.

This sequence belongs to the arthropod phospholipase D family. Class II subfamily. Mg(2+) serves as cofactor. As to expression, expressed by the venom gland.

It localises to the secreted. The catalysed reaction is an N-(acyl)-sphingosylphosphocholine = an N-(acyl)-sphingosyl-1,3-cyclic phosphate + choline. It catalyses the reaction an N-(acyl)-sphingosylphosphoethanolamine = an N-(acyl)-sphingosyl-1,3-cyclic phosphate + ethanolamine. It carries out the reaction a 1-acyl-sn-glycero-3-phosphocholine = a 1-acyl-sn-glycero-2,3-cyclic phosphate + choline. The enzyme catalyses a 1-acyl-sn-glycero-3-phosphoethanolamine = a 1-acyl-sn-glycero-2,3-cyclic phosphate + ethanolamine. In terms of biological role, dermonecrotic toxins cleave the phosphodiester linkage between the phosphate and headgroup of certain phospholipids (sphingolipid and lysolipid substrates), forming an alcohol (often choline) and a cyclic phosphate. This toxin acts on sphingomyelin (SM). It may also act on ceramide phosphoethanolamine (CPE), lysophosphatidylcholine (LPC) and lysophosphatidylethanolamine (LPE), but not on lysophosphatidylserine (LPS), and lysophosphatidylglycerol (LPG). It acts by transphosphatidylation, releasing exclusively cyclic phosphate products as second products. Induces dermonecrosis, hemolysis, increased vascular permeability, edema, inflammatory response, and platelet aggregation. The chain is Dermonecrotic toxin LruSicTox-alphaIC1c from Loxosceles rufescens (Mediterranean recluse spider).